The following is a 101-amino-acid chain: Protein RnfH (101 aa).

It belongs to the UPF0125 (RnfH) family.

The chain is Protein RnfH from Pseudomonas aeruginosa (strain LESB58).